The sequence spans 85 residues: Cytochrome c6 (85 aa).

Residues C14, C17, H18, and M58 each contribute to the heme c site.

Belongs to the cytochrome c family. PetJ subfamily. Monomer. Binds 1 heme c group covalently per subunit.

It localises to the cellular thylakoid lumen. Functionally, functions as an electron carrier between membrane-bound cytochrome b6-f and photosystem I in oxygenic photosynthesis. This is Cytochrome c6 (petJ) from Leptolyngbya boryana (Plectonema boryanum).